A 153-amino-acid chain; its full sequence is Endoribonuclease RegB (153 aa).

Its activity is regulated as follows. Activity is stimulated 10- to 100-fold by host ribosomal protein S1, which also helps confer substrate choice. Essential to the early nucleolytic processing of a number of T4 messenger RNAs. Specifically cleaves after the GG dinucleotide GGAG within consensus 5'-GGAGRAYARAA-3' (R is a purine and Y is a pyrimidine) sequences found mainly in translation initiation sites. The sequence is that of Endoribonuclease RegB (regB) from Enterobacteria phage T4 (Bacteriophage T4).